We begin with the raw amino-acid sequence, 259 residues long: Global transcriptional regulator CodY (259 aa).

Residues 1-155 (MNLLEKTRKI…GATVVGMEIL (155 aa)) are GAF domain. A DNA-binding region (H-T-H motif) is located at residues 203–222 (ASKIADRVGITRSVIVNALR). S215 is subject to Phosphoserine.

The protein belongs to the CodY family.

Its subcellular location is the cytoplasm. Functionally, DNA-binding global transcriptional regulator which is involved in the adaptive response to starvation and acts by directly or indirectly controlling the expression of numerous genes in response to nutrient availability. During rapid exponential growth, CodY is highly active and represses genes whose products allow adaptation to nutrient depletion. The polypeptide is Global transcriptional regulator CodY (Anoxybacillus flavithermus (strain DSM 21510 / WK1)).